Here is a 327-residue protein sequence, read N- to C-terminus: GMP reductase (327 aa).

Cys-175 serves as the catalytic Thioimidate intermediate. 204–227 (IIADGGIRTNGDVAKSIRFGATMV) lines the NADP(+) pocket.

The protein belongs to the IMPDH/GMPR family. GuaC type 2 subfamily.

The enzyme catalyses IMP + NH4(+) + NADP(+) = GMP + NADPH + 2 H(+). In terms of biological role, catalyzes the irreversible NADPH-dependent deamination of GMP to IMP. It functions in the conversion of nucleobase, nucleoside and nucleotide derivatives of G to A nucleotides, and in maintaining the intracellular balance of A and G nucleotides. This Bacillus anthracis protein is GMP reductase.